The primary structure comprises 263 residues: Undecaprenyl-diphosphatase 3 (263 aa).

The next 8 helical transmembrane spans lie at 15-37, 42-62, 83-103, 106-126, 142-162, 183-203, 216-236, and 242-262; these read GLTE…LIGF, AKVF…VIFW, LHII…HSAI, VLFG…LMIV, ITYK…WPGF, AEYT…LDLI, LFAT…VSFL, and VKLT…YFFI.

The protein belongs to the UppP family.

The protein localises to the cell membrane. It carries out the reaction di-trans,octa-cis-undecaprenyl diphosphate + H2O = di-trans,octa-cis-undecaprenyl phosphate + phosphate + H(+). Its function is as follows. Catalyzes the dephosphorylation of undecaprenyl diphosphate (UPP). Confers resistance to bacitracin. The sequence is that of Undecaprenyl-diphosphatase 3 from Bacillus thuringiensis subsp. konkukian (strain 97-27).